The chain runs to 252 residues: Probable transcriptional regulatory protein Tmel_0985 (252 aa).

It belongs to the TACO1 family.

It is found in the cytoplasm. This Thermosipho melanesiensis (strain DSM 12029 / CIP 104789 / BI429) protein is Probable transcriptional regulatory protein Tmel_0985.